We begin with the raw amino-acid sequence, 454 residues long: T-box protein VegT (454 aa).

Positions 57 to 230 (LWSQFHQEGT…HNPFAKGFRE (174 aa)) form a DNA-binding region, T-box. The segment covering 229-241 (REQERSHKRDDVL) has biased composition (basic and acidic residues). 2 disordered regions span residues 229–274 (REQE…ATRV) and 295–358 (ANQG…VPDS). The segment covering 308–325 (GVNQEQQVPTSSLNFYNK) has biased composition (polar residues).

Forms a repression complex on the promoters of the nodal/nr1 and siamois genes with the maternal factors tcf7l1/tcf3 and pouf5.1/oct-25. Interacts (via C-terminus) with tcf7l1/tcf3 (via N-terminus). Also interacts with the other POU-domain transcription factors pou5f1.2/oct-91 and pou5f1.3/oct-60.

The protein localises to the nucleus. Transcription factor required for both mesoderm and endoderm formation in the embryo; signaling determinants and concentration levels may determine which germ layer is formed. Acts together with beta-catenin to activate genes that are responsible for mesoderm induction including wnt-8, eomes t/bra, siamois, mix1 and sox17. Directly binds to promoter DNA. Patterns the mesoderm along the dorsoventral and posterior axis. Activates siamois gene transcription when alone or in combination with beta-catenin, but inhibits siamois transcription in combination with pou5f1.1/oct-25. In Xenopus borealis (Kenyan clawed frog), this protein is T-box protein VegT.